The sequence spans 2377 residues: DNA (cytosine-5-)-methyltransferase DMT5 (2377 aa).

The disordered stretch occupies residues 24–56 (GTADGAVNGGNIPNSQSQKRKRASPSPEIESEE). Residues 62 to 126 (YEIDYIADSR…KNPGKPRLSP (65 aa)) enclose the Chromo; shadow subtype domain. Positions 150–282 (GKSRAASSTD…KSSLPKAKLR (133 aa)) are disordered. Basic residues predominate over residues 201-213 (PTSKKVHPNKKCK). Acidic residues-rich tracts occupy residues 217–238 (DDESDFVFEEGEWDEDEDDDND) and 245–263 (EDDEDDEQERSAEEPESDE). Basic residues predominate over residues 268–282 (PAKKTKSSLPKAKLR). The region spanning 347 to 753 (LRVATMCSGT…IAALKVACHK (407 aa)) is the SAM-dependent MTase C5-type domain. C440 is a catalytic residue. The Helicase ATP-binding domain maps to 1450 to 1771 (AERPVMVRGG…RSIATFMGIH (322 aa)). 1463-1470 (DQVGYGKT) serves as a coordination point for ATP. Disordered stretches follow at residues 1642 to 1680 (KGQAYRDKHDSDSKAKPITKEELERWEASEDEDDDENSK), 2313 to 2334 (KGRGSSISMTNEKRTPTLTVKS), and 2347 to 2377 (SSFRSKKRSMEARDAEGVSDDDENSELSDII). A compositionally biased stretch (basic and acidic residues) spans 1645 to 1669 (AYRDKHDSDSKAKPITKEELERWEA). The region spanning 2152-2315 (KLEHLVNLIH…EIPQEEYKGR (164 aa)) is the Helicase C-terminal domain. Polar residues predominate over residues 2317 to 2334 (SSISMTNEKRTPTLTVKS). A compositionally biased stretch (acidic residues) spans 2363–2377 (GVSDDDENSELSDII).

In the N-terminal section; belongs to the class I-like SAM-binding methyltransferase superfamily. C5-methyltransferase family. The protein in the C-terminal section; belongs to the SNF2/RAD54 helicase family. As to quaternary structure, interacts with SWI6. Mg(2+) is required as a cofactor.

The protein resides in the nucleus. Its subcellular location is the chromosome. The enzyme catalyses a 2'-deoxycytidine in DNA + S-adenosyl-L-methionine + ATP + H2O = a 5-methyl-2'-deoxycytidine in DNA + S-adenosyl-L-homocysteine + ADP + phosphate + 2 H(+). Its activity is regulated as follows. Hemimethylated DNA substrates stimulate ATP hydrolysis and this is a prerequisite for methyltransferase activity. In terms of biological role, ATP-dependent cytosine methylase that maintains DNA methylation by acting at hemimethylated palindromic 5'-CG-3' sites to produce symmetrically methylated DNA strands. DNA methylation may play a role in transcriptional silencing, particularly at transposable elements. The protein is DNA (cytosine-5-)-methyltransferase DMT5 of Cryptococcus neoformans var. grubii serotype A (strain H99 / ATCC 208821 / CBS 10515 / FGSC 9487) (Filobasidiella neoformans var. grubii).